A 286-amino-acid polypeptide reads, in one-letter code: ATP synthase gamma chain (286 aa).

It belongs to the ATPase gamma chain family. As to quaternary structure, F-type ATPases have 2 components, CF(1) - the catalytic core - and CF(0) - the membrane proton channel. CF(1) has five subunits: alpha(3), beta(3), gamma(1), delta(1), epsilon(1). CF(0) has three main subunits: a, b and c.

It is found in the cell inner membrane. In terms of biological role, produces ATP from ADP in the presence of a proton gradient across the membrane. The gamma chain is believed to be important in regulating ATPase activity and the flow of protons through the CF(0) complex. The polypeptide is ATP synthase gamma chain (Shewanella baltica (strain OS223)).